A 273-amino-acid polypeptide reads, in one-letter code: 4-hydroxy-tetrahydrodipicolinate reductase (273 aa).

Residues 12-17 (GAGGRM) and Glu38 each bind NAD(+). Residue Arg39 participates in NADP(+) binding. NAD(+)-binding positions include 102–104 (GTT) and 126–129 (AANF). Catalysis depends on His159, which acts as the Proton donor/acceptor. Position 160 (His160) interacts with (S)-2,3,4,5-tetrahydrodipicolinate. Lys163 acts as the Proton donor in catalysis. 169–170 (GT) is a binding site for (S)-2,3,4,5-tetrahydrodipicolinate.

This sequence belongs to the DapB family. As to quaternary structure, homotetramer.

It localises to the cytoplasm. The catalysed reaction is (S)-2,3,4,5-tetrahydrodipicolinate + NAD(+) + H2O = (2S,4S)-4-hydroxy-2,3,4,5-tetrahydrodipicolinate + NADH + H(+). The enzyme catalyses (S)-2,3,4,5-tetrahydrodipicolinate + NADP(+) + H2O = (2S,4S)-4-hydroxy-2,3,4,5-tetrahydrodipicolinate + NADPH + H(+). It participates in amino-acid biosynthesis; L-lysine biosynthesis via DAP pathway; (S)-tetrahydrodipicolinate from L-aspartate: step 4/4. Its function is as follows. Catalyzes the conversion of 4-hydroxy-tetrahydrodipicolinate (HTPA) to tetrahydrodipicolinate. The polypeptide is 4-hydroxy-tetrahydrodipicolinate reductase (Escherichia fergusonii (strain ATCC 35469 / DSM 13698 / CCUG 18766 / IAM 14443 / JCM 21226 / LMG 7866 / NBRC 102419 / NCTC 12128 / CDC 0568-73)).